The sequence spans 393 residues: Putative mitogen-activated protein kinase kinase kinase 7-like (393 aa).

In terms of domain architecture, Protein kinase spans 11 to 266 (KLSEKFLGAG…PSMKEIEKFL (256 aa)). Residues 17 to 25 (LGAGSGGAV) and Lys38 each bind ATP. The active-site Proton acceptor is the Asp133. The segment at 339–379 (AAADGDREVRRAEKDTERETSRAAHNGERETRRAGQDVGRE) is disordered.

This sequence belongs to the protein kinase superfamily. STE Ser/Thr protein kinase family. MAP kinase kinase kinase subfamily. The cofactor is Mg(2+).

It carries out the reaction L-seryl-[protein] + ATP = O-phospho-L-seryl-[protein] + ADP + H(+). The enzyme catalyses L-threonyl-[protein] + ATP = O-phospho-L-threonyl-[protein] + ADP + H(+). This chain is Putative mitogen-activated protein kinase kinase kinase 7-like (Takl1), found in Drosophila melanogaster (Fruit fly).